We begin with the raw amino-acid sequence, 272 residues long: HTH-type transcriptional repressor AllR (272 aa).

Positions 1 to 20 (MTEVRRRGRPGQQEPSAQKG) are disordered. Residues 21–83 (AQALERGIAI…SQLGWWHIGL (63 aa)) enclose the HTH iclR-type domain. The H-T-H motif DNA-binding region spans 43–62 (VSDISLNLDLPLSTTFRLLK). The 170-residue stretch at 98–267 (VLSVGGPFMR…ARNISTALGL (170 aa)) folds into the IclR-ED domain. Glyoxylate contacts are provided by residues 154-156 (SGA), Asp207, Cys217, and 234-236 (SIS).

Functionally, negative regulator of allantoin and glyoxylate utilization operons. Binds to the gcl promoter and to the allS-allA intergenic region. This chain is HTH-type transcriptional repressor AllR (allR), found in Klebsiella pneumoniae.